Here is a 342-residue protein sequence, read N- to C-terminus: MLTERQLLVLHAIVDDYVRSAEPVGSRSISKREDIPYSPATIRNEMADLEELGFLEKPHSSAGRVPSQQGYRYYVDHLLSPHRLTVAERAGLSRLTTARLQAMEEVFQESARILSEMTSYVSIVLGPESINERLRHIQIIPMSNQKAVVILVSENGHVENRLVQVDENVTPSDLERTVNLLNERLVGTPLSSLQRKLNTELAQLFKAHINNYEHILHMLQQSMVPASGEKLFFSGKTNLMEQPEFQDVEKMRLLYKALEEENLLQKWLRAQQTDGLHVSIGQENELEAFESCSVITASYAIDGRHVGTLGVIGPTRMEYKRMIKVVDSLSKDLTKRLTGFER.

It belongs to the HrcA family.

Negative regulator of class I heat shock genes (grpE-dnaK-dnaJ and groELS operons). Prevents heat-shock induction of these operons. This Shouchella clausii (strain KSM-K16) (Alkalihalobacillus clausii) protein is Heat-inducible transcription repressor HrcA.